Reading from the N-terminus, the 200-residue chain is ADP-ribosylation factor-like protein 4D (200 aa).

The N-myristoyl glycine moiety is linked to residue G2. Residues 27–34 (GLDSAGKT), 75–79 (DVGGQ), and 134–137 (NKQD) each bind GTP.

It belongs to the small GTPase superfamily. Arf family. As to quaternary structure, interacts with CYTH2; the interaction is direct and ARL4D GTP-dependent. Does not interact with ARL4D.

It localises to the nucleus. The protein localises to the nucleolus. The protein resides in the cell membrane. Its subcellular location is the cytoplasm. In terms of biological role, small GTP-binding protein which cycles between an inactive GDP-bound and an active GTP-bound form, and the rate of cycling is regulated by guanine nucleotide exchange factors (GEF) and GTPase-activating proteins (GAP). GTP-binding protein that does not act as an allosteric activator of the cholera toxin catalytic subunit. Recruits CYTH1, CYTH2, CYTH3 and CYTH4 to the plasma membrane in GDP-bound form. The chain is ADP-ribosylation factor-like protein 4D (ARL4D) from Bos taurus (Bovine).